A 596-amino-acid polypeptide reads, in one-letter code: Proteasome-associated ATPase (596 aa).

The stretch at 12–94 forms a coiled coil; the sequence is SRWERETQDL…KEEIDRLAQP (83 aa). 280 to 285 lines the ATP pocket; it reads GCGKTL. The docks into pockets in the proteasome alpha-ring stretch occupies residues 595–596; sequence YL.

It belongs to the AAA ATPase family. As to quaternary structure, homohexamer. Assembles into a hexameric ring structure that caps the 20S proteasome core. Strongly interacts with the prokaryotic ubiquitin-like protein Pup through a hydrophobic interface; the interacting region of ARC lies in its N-terminal coiled-coil domain. There is one Pup binding site per ARC hexamer ring. Upon ATP-binding, the C-terminus of ARC interacts with the alpha-rings of the proteasome core, possibly by binding to the intersubunit pockets.

The protein operates within protein degradation; proteasomal Pup-dependent pathway. In terms of biological role, ATPase which is responsible for recognizing, binding, unfolding and translocation of pupylated proteins into the bacterial 20S proteasome core particle. May be essential for opening the gate of the 20S proteasome via an interaction with its C-terminus, thereby allowing substrate entry and access to the site of proteolysis. Thus, the C-termini of the proteasomal ATPase may function like a 'key in a lock' to induce gate opening and therefore regulate proteolysis. This Stackebrandtia nassauensis (strain DSM 44728 / CIP 108903 / NRRL B-16338 / NBRC 102104 / LLR-40K-21) protein is Proteasome-associated ATPase.